A 505-amino-acid polypeptide reads, in one-letter code: Histidine ammonia-lyase (505 aa).

Positions 141 to 143 form a cross-link, 5-imidazolinone (Ala-Gly); it reads ASG. Ser-142 bears the 2,3-didehydroalanine (Ser) mark.

It belongs to the PAL/histidase family. Post-translationally, contains an active site 4-methylidene-imidazol-5-one (MIO), which is formed autocatalytically by cyclization and dehydration of residues Ala-Ser-Gly.

The protein localises to the cytoplasm. It carries out the reaction L-histidine = trans-urocanate + NH4(+). It participates in amino-acid degradation; L-histidine degradation into L-glutamate; N-formimidoyl-L-glutamate from L-histidine: step 1/3. This is Histidine ammonia-lyase from Bacillus cereus (strain ZK / E33L).